The primary structure comprises 339 residues: Ureidoglycine carbamoyltransferase (339 aa).

The protein belongs to the aspartate/ornithine carbamoyltransferase superfamily. As to quaternary structure, homodimer.

The catalysed reaction is (S)-2-ureidoglycine + carbamoyl phosphate = allantoate + phosphate + H(+). It participates in purine metabolism. Catalyzes the phosphorolysis of allantoate to ureidoglycine and carbamoyl phosphate. Is likely involved in a purine degradation pathway. This is Ureidoglycine carbamoyltransferase from Rubrobacter xylanophilus (strain DSM 9941 / JCM 11954 / NBRC 16129 / PRD-1).